Reading from the N-terminus, the 278-residue chain is Large ribosomal subunit protein uL2 (278 aa).

The interval 218-278 is disordered; sequence RPHNRGVVMN…IMRSRHQRKK (61 aa).

The protein belongs to the universal ribosomal protein uL2 family. In terms of assembly, part of the 50S ribosomal subunit. Forms a bridge to the 30S subunit in the 70S ribosome.

One of the primary rRNA binding proteins. Required for association of the 30S and 50S subunits to form the 70S ribosome, for tRNA binding and peptide bond formation. It has been suggested to have peptidyltransferase activity; this is somewhat controversial. Makes several contacts with the 16S rRNA in the 70S ribosome. In Rhizobium etli (strain CIAT 652), this protein is Large ribosomal subunit protein uL2.